Here is a 321-residue protein sequence, read N- to C-terminus: MSKPIVMERGVKYRDADKMALIPVKNVVTEREALLRKPEWMKIKLPADSTRIQGIKAAMRKNGLHSVCEEASCPNLAECFNHGTATFMILGAICTRRCPFCDVAHGRPVAPDANEPVKLAQTIADMALRYVVITSVDRDDLRDGGAQHFADCITAIREKSPSIKIETLVPDFRGRMDRALDILTATPPDVFNHNLENVPRIYRQVRPGADYNWSLKLLERFKEAHPEIPTKSGLMVGLGETNEEIIEVMRDLRRHGVTMLTLGQYLQPSRHHLPVQRYVSPDEFEEMKAEALAMGFTHAACGPFVRSSYHADLQAKGIEVK.

Cysteine 68, cysteine 73, cysteine 79, cysteine 94, cysteine 98, cysteine 101, and serine 308 together coordinate [4Fe-4S] cluster. The Radical SAM core domain occupies phenylalanine 80–threonine 297.

It belongs to the radical SAM superfamily. Lipoyl synthase family. Requires [4Fe-4S] cluster as cofactor.

It is found in the cytoplasm. It carries out the reaction [[Fe-S] cluster scaffold protein carrying a second [4Fe-4S](2+) cluster] + N(6)-octanoyl-L-lysyl-[protein] + 2 oxidized [2Fe-2S]-[ferredoxin] + 2 S-adenosyl-L-methionine + 4 H(+) = [[Fe-S] cluster scaffold protein] + N(6)-[(R)-dihydrolipoyl]-L-lysyl-[protein] + 4 Fe(3+) + 2 hydrogen sulfide + 2 5'-deoxyadenosine + 2 L-methionine + 2 reduced [2Fe-2S]-[ferredoxin]. It participates in protein modification; protein lipoylation via endogenous pathway; protein N(6)-(lipoyl)lysine from octanoyl-[acyl-carrier-protein]: step 2/2. In terms of biological role, catalyzes the radical-mediated insertion of two sulfur atoms into the C-6 and C-8 positions of the octanoyl moiety bound to the lipoyl domains of lipoate-dependent enzymes, thereby converting the octanoylated domains into lipoylated derivatives. The protein is Lipoyl synthase of Escherichia fergusonii (strain ATCC 35469 / DSM 13698 / CCUG 18766 / IAM 14443 / JCM 21226 / LMG 7866 / NBRC 102419 / NCTC 12128 / CDC 0568-73).